Here is a 299-residue protein sequence, read N- to C-terminus: Putative beta-glucosidase 2 (299 aa).

Positions 1–16 (MLHCITTIFLSISRMT) are cleaved as a signal peptide. 49–50 (NE) contributes to the a beta-D-glucoside binding site. Residue E50 is the Proton donor of the active site. An intrachain disulfide couples C69 to C72. N71 and N76 each carry an N-linked (GlcNAc...) asparagine glycan. A beta-D-glucoside is bound at residue Y189. A glycan (N-linked (GlcNAc...) asparagine) is linked at N222. Position 255 (E255) interacts with a beta-D-glucoside. Catalysis depends on E255, which acts as the Nucleophile. N290 carries N-linked (GlcNAc...) asparagine glycosylation.

This sequence belongs to the glycosyl hydrolase 1 family.

It catalyses the reaction Hydrolysis of terminal, non-reducing beta-D-glucosyl residues with release of beta-D-glucose.. In Arabidopsis thaliana (Mouse-ear cress), this protein is Putative beta-glucosidase 2.